Reading from the N-terminus, the 514-residue chain is Retron Vc95 probable ATPase (514 aa).

An ATP-binding motif is present at residues 92–99 (GNNGSGKS).

Probable ATPase component of antiviral defense system retron Vc95, composed of a non-coding RNA (ncRNA), a reverse transcriptase (RT), this protein and a putative HNH endonuclease. Expression of retron Vc95 confers protection against bacteriophages T2, T4 and T6. At multiplicity of infection (MOI) of 0.02 cultures slow growth when infected with T4 but do not collapse, at MOI 2 cultures enter growth stasis. The chain is Retron Vc95 probable ATPase from Vibrio cholerae serotype O1 biovar El Tor.